Consider the following 343-residue polypeptide: MKNQWKTSDFDYNLPVELIAQRPLADRSGSRLLYIDRSRRTVSHRQFNGFVEQVKPNDLVVLNDTKVIPAGLFGHKQTGGKVECLVERILSKDRFLAHIRASKAPKLGSQIIIADNFKIIIEGRYNDLFECVLHSSASILDLLYQHGRIPLPPYIQREPDKDDQARYQTIFAERAGAVAAPTAGLHFNEETFDALRKKGAAITYVTLHVGAGTFQPVRADSLADHRMHHEWMEVSKAVCDAIAKCRKNNGRVIAVGTTVMRCLETATKNGECRPYAGETDLFIYPGFQFKCVDALLTNFHLPKSTLLMLVCAFGGYELVMEAYQKAVENRYRFFSYGDAMLIS.

The protein belongs to the QueA family. As to quaternary structure, monomer.

The protein localises to the cytoplasm. The enzyme catalyses 7-aminomethyl-7-carbaguanosine(34) in tRNA + S-adenosyl-L-methionine = epoxyqueuosine(34) in tRNA + adenine + L-methionine + 2 H(+). It functions in the pathway tRNA modification; tRNA-queuosine biosynthesis. Its function is as follows. Transfers and isomerizes the ribose moiety from AdoMet to the 7-aminomethyl group of 7-deazaguanine (preQ1-tRNA) to give epoxyqueuosine (oQ-tRNA). The protein is S-adenosylmethionine:tRNA ribosyltransferase-isomerase of Coxiella burnetii (strain CbuG_Q212) (Coxiella burnetii (strain Q212)).